A 312-amino-acid polypeptide reads, in one-letter code: Malate dehydrogenase (312 aa).

NAD(+) contacts are provided by residues Gly12–Gly17 and Asp36. Arg87 and Arg93 together coordinate substrate. NAD(+) is bound by residues Asn100 and Leu123–Asn125. Asn125 contributes to the substrate binding site. Ser149 bears the Phosphoserine mark. Arg156 contributes to the substrate binding site. His180 serves as the catalytic Proton acceptor.

Belongs to the LDH/MDH superfamily. MDH type 3 family.

The catalysed reaction is (S)-malate + NAD(+) = oxaloacetate + NADH + H(+). Catalyzes the reversible oxidation of malate to oxaloacetate. In Geobacillus sp. (strain WCH70), this protein is Malate dehydrogenase.